The primary structure comprises 358 residues: Chorismate synthase (358 aa).

An NADP(+)-binding site is contributed by R46. Residues 123-125 (RSS), 235-236 (NA), G275, 290-294 (KPTPS), and R316 contribute to the FMN site.

It belongs to the chorismate synthase family. In terms of assembly, homotetramer. Requires FMNH2 as cofactor.

The catalysed reaction is 5-O-(1-carboxyvinyl)-3-phosphoshikimate = chorismate + phosphate. It functions in the pathway metabolic intermediate biosynthesis; chorismate biosynthesis; chorismate from D-erythrose 4-phosphate and phosphoenolpyruvate: step 7/7. Its function is as follows. Catalyzes the anti-1,4-elimination of the C-3 phosphate and the C-6 proR hydrogen from 5-enolpyruvylshikimate-3-phosphate (EPSP) to yield chorismate, which is the branch point compound that serves as the starting substrate for the three terminal pathways of aromatic amino acid biosynthesis. This reaction introduces a second double bond into the aromatic ring system. The chain is Chorismate synthase from Sulfurimonas denitrificans (strain ATCC 33889 / DSM 1251) (Thiomicrospira denitrificans (strain ATCC 33889 / DSM 1251)).